Here is a 498-residue protein sequence, read N- to C-terminus: ATP synthase subunit beta, chloroplastic (498 aa).

172–179 lines the ATP pocket; it reads GGAGVGKT.

The protein belongs to the ATPase alpha/beta chains family. As to quaternary structure, F-type ATPases have 2 components, CF(1) - the catalytic core - and CF(0) - the membrane proton channel. CF(1) has five subunits: alpha(3), beta(3), gamma(1), delta(1), epsilon(1). CF(0) has four main subunits: a(1), b(1), b'(1) and c(9-12).

The protein localises to the plastid. It is found in the chloroplast thylakoid membrane. The enzyme catalyses ATP + H2O + 4 H(+)(in) = ADP + phosphate + 5 H(+)(out). Its function is as follows. Produces ATP from ADP in the presence of a proton gradient across the membrane. The catalytic sites are hosted primarily by the beta subunits. This is ATP synthase subunit beta, chloroplastic from Saruma henryi (Upright wild ginger).